The following is a 447-amino-acid chain: Multicopper oxidase mco (447 aa).

The segment covering 1-25 (MMDMKENDQKRNDMMDMKSHDERKN) has biased composition (basic and acidic residues). Residues 1–43 (MMDMKENDQKRNDMMDMKSHDERKNLNSSQGKNEITFPKVLDP) form a disordered region. Residues H107, H109, H147, H149, H375, H378, H380, H428, C429, H430, H434, and M439 each contribute to the Cu cation site.

This sequence belongs to the multicopper oxidase family. It depends on Cu cation as a cofactor.

The protein localises to the cytoplasm. In terms of biological role, may be involved in copper homeostasis and oxidative stress response. Oxidizes the substrate 3,3'-dimethoxybenzidine in vitro. Also possesses low levels of phenoloxidase and ferroxidase activities. The chain is Multicopper oxidase mco (mco) from Staphylococcus aureus.